Reading from the N-terminus, the 363-residue chain is NAD(P)H-quinone oxidoreductase subunit 1, chloroplastic (363 aa).

The next 6 membrane-spanning stretches (helical) occupy residues 27 to 47 (VWLL…VLVI), 104 to 124 (IAVI…HLVL), 127 to 147 (LSIG…GLLM), 248 to 268 (YSGI…LVSS), 300 to 320 (VFGM…FLFI), and 343 to 363 (FLLP…LFSL).

It belongs to the complex I subunit 1 family. In terms of assembly, NDH is composed of at least 16 different subunits, 5 of which are encoded in the nucleus.

It localises to the plastid. The protein localises to the chloroplast thylakoid membrane. The enzyme catalyses a plastoquinone + NADH + (n+1) H(+)(in) = a plastoquinol + NAD(+) + n H(+)(out). It catalyses the reaction a plastoquinone + NADPH + (n+1) H(+)(in) = a plastoquinol + NADP(+) + n H(+)(out). NDH shuttles electrons from NAD(P)H:plastoquinone, via FMN and iron-sulfur (Fe-S) centers, to quinones in the photosynthetic chain and possibly in a chloroplast respiratory chain. The immediate electron acceptor for the enzyme in this species is believed to be plastoquinone. Couples the redox reaction to proton translocation, and thus conserves the redox energy in a proton gradient. The polypeptide is NAD(P)H-quinone oxidoreductase subunit 1, chloroplastic (Ranunculus macranthus (Large buttercup)).